The primary structure comprises 238 residues: Large ribosomal subunit protein uL2 (238 aa).

Residues 199–238 (PHGGGLHQSVSRSSTVARNTPPGRKVGHIAARRTGRRDRK) are disordered. A compositionally biased stretch (polar residues) spans 206-216 (QSVSRSSTVAR). Positions 223–238 (KVGHIAARRTGRRDRK) are enriched in basic residues.

The protein belongs to the universal ribosomal protein uL2 family. In terms of assembly, part of the 50S ribosomal subunit. Forms a bridge to the 30S subunit in the 70S ribosome.

Its function is as follows. One of the primary rRNA binding proteins. Required for association of the 30S and 50S subunits to form the 70S ribosome, for tRNA binding and peptide bond formation. It has been suggested to have peptidyltransferase activity; this is somewhat controversial. Makes several contacts with the 16S rRNA in the 70S ribosome. The chain is Large ribosomal subunit protein uL2 from Metallosphaera sedula (strain ATCC 51363 / DSM 5348 / JCM 9185 / NBRC 15509 / TH2).